Reading from the N-terminus, the 788-residue chain is Ribonucleoside-diphosphate reductase large subunit (788 aa).

Residues 7–98 (TYVVKRDGRK…VSNLHKKTNK (92 aa)) form the ATP-cone domain. ATP-binding positions include 11 to 12 (KR), 17 to 23 (EDVHFDK), Thr-59, and Asp-63. Positions 208 and 223 each coordinate GDP. A disulfide bond links Cys-224 and Cys-450. Residues 232–234 (DSI), Lys-249, Arg-262, and 269–270 (AG) contribute to the dTTP site. Asn-433 is a GDP binding site. Residue Asn-433 is the Proton acceptor of the active site. The Cysteine radical intermediate role is filled by Cys-435. GDP-binding positions include Glu-437 and 610–613 (TAST). Residue Glu-437 is the Proton acceptor of the active site.

This sequence belongs to the ribonucleoside diphosphate reductase large chain family. Heterodimer of a large and a small subunit.

It carries out the reaction a 2'-deoxyribonucleoside 5'-diphosphate + [thioredoxin]-disulfide + H2O = a ribonucleoside 5'-diphosphate + [thioredoxin]-dithiol. Its activity is regulated as follows. Under complex allosteric control mediated by deoxynucleoside triphosphates and ATP binding to separate specificity and activation sites on the large subunit. The type of nucleotide bound at the specificity site determines substrate preference. It seems probable that ATP makes the enzyme reduce CDP and UDP, dGTP favors ADP reduction and dTTP favors GDP reduction. Stimulated by ATP and inhibited by dATP binding to the activity site. In terms of biological role, provides the precursors necessary for DNA synthesis. Catalyzes the biosynthesis of deoxyribonucleotides from the corresponding ribonucleotides. In Caenorhabditis elegans, this protein is Ribonucleoside-diphosphate reductase large subunit (rnr-1).